Here is a 482-residue protein sequence, read N- to C-terminus: Putative metallophosphoesterase F40B5.2 (482 aa).

Transmembrane regions (helical) follow at residues 15–35, 129–149, 156–176, and 205–225; these read MNLK…SIAI, ALMM…YIFL, IAIT…FLLI, and CYHI…GLYT. A divalent metal cation-binding residues include D256, H258, D288, N319, H421, and H423.

The protein belongs to the metallophosphoesterase superfamily. LOC643853 family.

It is found in the membrane. The sequence is that of Putative metallophosphoesterase F40B5.2 from Caenorhabditis elegans.